We begin with the raw amino-acid sequence, 630 residues long: Subtilisin-like protease 1 (630 aa).

A signal peptide spans 1-25; it reads MVLTRRAALLLCPWVIQLVIKRTLA. A propeptide spans 26–202 (inhibition peptide); that stretch reads GDILPNEGKK…IESDKLVGAD (177 aa). The tract at residues 72–125 is disordered; it reads NAYNPDRDAPKEELQKLQDQQETPSKQPNNLRNSPQKRAEKKESPGKNKKSLRL. A compositionally biased stretch (basic and acidic residues) spans 76 to 87; the sequence is PDRDAPKEELQK. Polar residues predominate over residues 94 to 107; sequence TPSKQPNNLRNSPQ. The span at 108 to 117 shows a compositional bias: basic and acidic residues; it reads KRAEKKESPG. Ca(2+)-binding residues include Glu-129, Asn-130, Thr-133, Pro-135, and Gly-190. The tract at residues 230–254 is disordered; the sequence is LEVPSGESPPSHAASSGSPFDDDDD. Over residues 233-248 the composition is skewed to low complexity; it reads PSGESPPSHAASSGSP. Asp-281 is a binding site for Ca(2+). A Peptidase S8 domain is found at 287–604; that stretch reads QWGLDLARLD…GGYVDILRAV (318 aa). Intrachain disulfides connect Cys-313-Cys-423, Cys-402-Cys-419, and Cys-465-Cys-478. Asp-316 (charge relay system) is an active-site residue. 11 residues coordinate Ca(2+): Asp-325, Glu-336, Arg-340, Val-343, Asp-344, Asp-345, Asp-346, Asn-348, Val-350, Asp-352, and Asp-353. His-372 functions as the Charge relay system in the catalytic mechanism. Ca(2+) is bound by residues Val-383, Asn-386, Ile-388, and Ile-390. A glycan (N-linked (GlcNAc...) asparagine) is linked at Asn-546. The active-site Charge relay system is Ser-549.

The protein belongs to the peptidase S8 family. As to quaternary structure, heterodimer between p54 form and prodomain p31; the interaction inhibits p54 catalytic activity. Heterodimer p31-p54 is monomeric at basic pH and dimeric at acidic pH; dimerization is driven by the N-terminal prodomain (p31). It depends on Ca(2+) as a cofactor. In terms of processing, the prodomain (p31) is cleaved, probably by autocatalysis, and remains non-covalently associated with the p54 form as an inhibitor. p54 is further cleaved into the p45/p47 forms. Post-translationally, the relevance of the N-glycosylation is not clear. In an insect expression system, SUB1 glycosylation appears to affect its processing into the active mature form suggesting that SUB1 may not be N-glycosylated in parasites.

The protein resides in the secreted. Its subcellular location is the parasitophorous vacuole lumen. The catalysed reaction is Hydrolysis of proteins with broad specificity for peptide bonds, and a preference for a large uncharged residue in P1. Hydrolyzes peptide amides.. With respect to regulation, inhibited by peptidic alpha-ketoamide inhibitors. Inhibited by the alpha-ketoamide nonapeptide JMV5126 (isocaproyl-KITAQ(CO)DDEE-NH2). Inhibited by the alpha-ketoamide peptide MAM-117. Functionally, serine protease which plays an essential role in merozoite invasion of and egress from host erythrocytes by processing and activating various merozoite surface and parasitophorous vacuole proteins. This Plasmodium vivax protein is Subtilisin-like protease 1.